A 270-amino-acid chain; its full sequence is Phosphatidylglycerol--prolipoprotein diacylglyceryl transferase (270 aa).

7 helical membrane passes run 10-30 (VAVA…LVGI), 56-76 (LIFW…VLFY), 92-112 (WKGG…AWWF), 120-140 (FFQL…AGRI), 175-195 (SQLY…NLYA), 202-222 (MAVS…VEFV), and 237-257 (VTMG…LIWL). Arginine 139 provides a ligand contact to a 1,2-diacyl-sn-glycero-3-phospho-(1'-sn-glycerol).

The protein belongs to the Lgt family.

The protein resides in the cell inner membrane. It catalyses the reaction L-cysteinyl-[prolipoprotein] + a 1,2-diacyl-sn-glycero-3-phospho-(1'-sn-glycerol) = an S-1,2-diacyl-sn-glyceryl-L-cysteinyl-[prolipoprotein] + sn-glycerol 1-phosphate + H(+). It participates in protein modification; lipoprotein biosynthesis (diacylglyceryl transfer). Its function is as follows. Catalyzes the transfer of the diacylglyceryl group from phosphatidylglycerol to the sulfhydryl group of the N-terminal cysteine of a prolipoprotein, the first step in the formation of mature lipoproteins. The polypeptide is Phosphatidylglycerol--prolipoprotein diacylglyceryl transferase (Pseudomonas savastanoi pv. phaseolicola (strain 1448A / Race 6) (Pseudomonas syringae pv. phaseolicola (strain 1448A / Race 6))).